The following is an 81-amino-acid chain: Defensin-like protein b (81 aa).

An N-terminal signal peptide occupies residues 1-26; it reads MRNATFFIVFYVFISLVLSNVQDVTA. 4 disulfide bridges follow: C31-C81, C42-C66, C50-C76, and C64-C78.

It belongs to the DEFL family. In terms of tissue distribution, expressed in microspores and in young and mature anthers.

It is found in the secreted. Its function is as follows. Involved in self-incompatibility. The chain is Defensin-like protein b (SCRb-1) from Arabidopsis lyrata (Lyre-leaved rock-cress).